A 293-amino-acid chain; its full sequence is Phosphate-binding protein PstS 2 (293 aa).

Residues 1–23 (MKKHKMLSLLAVSGLMGIGILAG) form the signal peptide. Cys-24 carries N-palmitoyl cysteine lipidation. The S-diacylglycerol cysteine moiety is linked to residue Cys-24.

It belongs to the PstS family. The complex is composed of two ATP-binding proteins (PstB), two transmembrane proteins (PstC and PstA) and a solute-binding protein (PstS).

The protein resides in the cell membrane. In terms of biological role, part of the ABC transporter complex PstSACB involved in phosphate import. This Streptococcus agalactiae serotype III (strain NEM316) protein is Phosphate-binding protein PstS 2 (pstS2).